A 484-amino-acid polypeptide reads, in one-letter code: Protein nucleotidyltransferase YdiU (484 aa).

8 residues coordinate ATP: Gly-81, Gly-83, Arg-84, Lys-103, Asp-115, Gly-116, Arg-166, and Arg-173. Asp-244 serves as the catalytic Proton acceptor. 2 residues coordinate Mg(2+): Asn-245 and Asp-254. Residue Asp-254 coordinates ATP.

Belongs to the SELO family. It depends on Mg(2+) as a cofactor. Mn(2+) serves as cofactor.

It carries out the reaction L-seryl-[protein] + ATP = 3-O-(5'-adenylyl)-L-seryl-[protein] + diphosphate. It catalyses the reaction L-threonyl-[protein] + ATP = 3-O-(5'-adenylyl)-L-threonyl-[protein] + diphosphate. The catalysed reaction is L-tyrosyl-[protein] + ATP = O-(5'-adenylyl)-L-tyrosyl-[protein] + diphosphate. The enzyme catalyses L-histidyl-[protein] + UTP = N(tele)-(5'-uridylyl)-L-histidyl-[protein] + diphosphate. It carries out the reaction L-seryl-[protein] + UTP = O-(5'-uridylyl)-L-seryl-[protein] + diphosphate. It catalyses the reaction L-tyrosyl-[protein] + UTP = O-(5'-uridylyl)-L-tyrosyl-[protein] + diphosphate. Functionally, nucleotidyltransferase involved in the post-translational modification of proteins. It can catalyze the addition of adenosine monophosphate (AMP) or uridine monophosphate (UMP) to a protein, resulting in modifications known as AMPylation and UMPylation. The chain is Protein nucleotidyltransferase YdiU from Shewanella oneidensis (strain ATCC 700550 / JCM 31522 / CIP 106686 / LMG 19005 / NCIMB 14063 / MR-1).